The sequence spans 640 residues: 1-deoxy-D-xylulose-5-phosphate synthase (640 aa).

Thiamine diphosphate contacts are provided by residues H79 and 120–122 (GHS). A Mg(2+)-binding site is contributed by D151. Thiamine diphosphate contacts are provided by residues 152 to 153 (GS), N180, Y290, and E372. Residue N180 coordinates Mg(2+).

This sequence belongs to the transketolase family. DXPS subfamily. Homodimer. The cofactor is Mg(2+). It depends on thiamine diphosphate as a cofactor.

It carries out the reaction D-glyceraldehyde 3-phosphate + pyruvate + H(+) = 1-deoxy-D-xylulose 5-phosphate + CO2. Its pathway is metabolic intermediate biosynthesis; 1-deoxy-D-xylulose 5-phosphate biosynthesis; 1-deoxy-D-xylulose 5-phosphate from D-glyceraldehyde 3-phosphate and pyruvate: step 1/1. Catalyzes the acyloin condensation reaction between C atoms 2 and 3 of pyruvate and glyceraldehyde 3-phosphate to yield 1-deoxy-D-xylulose-5-phosphate (DXP). The sequence is that of 1-deoxy-D-xylulose-5-phosphate synthase from Rhodopseudomonas palustris (strain BisA53).